The chain runs to 590 residues: Aspartate--tRNA(Asp/Asn) ligase (590 aa).

Residue glutamate 175 participates in L-aspartate binding. An aspartate region spans residues 199–202; it reads QQYK. L-aspartate-binding residues include arginine 221 and histidine 450. 221 to 223 provides a ligand contact to ATP; it reads RDE. Residue glutamate 484 participates in ATP binding. Arginine 491 is an L-aspartate binding site. Residue 536-539 coordinates ATP; sequence GVDR.

Belongs to the class-II aminoacyl-tRNA synthetase family. Type 1 subfamily. As to quaternary structure, homodimer.

The protein localises to the cytoplasm. It catalyses the reaction tRNA(Asx) + L-aspartate + ATP = L-aspartyl-tRNA(Asx) + AMP + diphosphate. Its function is as follows. Aspartyl-tRNA synthetase with relaxed tRNA specificity since it is able to aspartylate not only its cognate tRNA(Asp) but also tRNA(Asn). Reaction proceeds in two steps: L-aspartate is first activated by ATP to form Asp-AMP and then transferred to the acceptor end of tRNA(Asp/Asn). The chain is Aspartate--tRNA(Asp/Asn) ligase from Nitrobacter hamburgensis (strain DSM 10229 / NCIMB 13809 / X14).